The following is a 356-amino-acid chain: Protein RecA (356 aa).

ATP is bound at residue 71–78; it reads GPESSGKT.

Belongs to the RecA family.

It localises to the cytoplasm. Its function is as follows. Can catalyze the hydrolysis of ATP in the presence of single-stranded DNA, the ATP-dependent uptake of single-stranded DNA by duplex DNA, and the ATP-dependent hybridization of homologous single-stranded DNAs. It interacts with LexA causing its activation and leading to its autocatalytic cleavage. This Synechococcus elongatus (strain ATCC 33912 / PCC 7942 / FACHB-805) (Anacystis nidulans R2) protein is Protein RecA.